Here is a 337-residue protein sequence, read N- to C-terminus: ATP-dependent (S)-NAD(P)H-hydrate dehydratase (337 aa).

A Phosphoserine modification is found at S6. The YjeF C-terminal domain occupies 11–335 (IKLAQKRCIP…DRVGEVFAKL (325 aa)). Residues G121 and 182–188 (NVVEFKR) each bind (6S)-NADPHX. Residues 218 to 222 (KGQSD) and 240 to 249 (GSNKRVGGQG) contribute to the ATP site. The disordered stretch occupies residues 224-246 (IFSPDSEKDMLTNSEEGSNKRVG). (6S)-NADPHX is bound at residue D250.

It belongs to the NnrD/CARKD family. Requires Mg(2+) as cofactor.

The protein localises to the cytoplasm. The enzyme catalyses (6S)-NADHX + ATP = ADP + phosphate + NADH + H(+). It carries out the reaction (6S)-NADPHX + ATP = ADP + phosphate + NADPH + H(+). In terms of biological role, catalyzes the dehydration of the S-form of NAD(P)HX at the expense of ATP, which is converted to ADP. Together with NAD(P)HX epimerase, which catalyzes the epimerization of the S- and R-forms, the enzyme allows the repair of both epimers of NAD(P)HX, a damaged form of NAD(P)H that is a result of enzymatic or heat-dependent hydration. The sequence is that of ATP-dependent (S)-NAD(P)H-hydrate dehydratase from Saccharomyces cerevisiae (strain ATCC 204508 / S288c) (Baker's yeast).